The sequence spans 185 residues: Ribosome-recycling factor (185 aa).

It belongs to the RRF family.

The protein localises to the cytoplasm. In terms of biological role, responsible for the release of ribosomes from messenger RNA at the termination of protein biosynthesis. May increase the efficiency of translation by recycling ribosomes from one round of translation to another. This Thermosipho melanesiensis (strain DSM 12029 / CIP 104789 / BI429) protein is Ribosome-recycling factor.